Consider the following 209-residue polypeptide: Superoxide dismutase [Mn/Fe] (209 aa).

Residues histidine 38, histidine 90, aspartate 172, and histidine 176 each contribute to the Fe(3+) site. Histidine 38, histidine 90, aspartate 172, and histidine 176 together coordinate Mn(2+).

This sequence belongs to the iron/manganese superoxide dismutase family. Mn(2+) serves as cofactor. Fe(3+) is required as a cofactor.

It catalyses the reaction 2 superoxide + 2 H(+) = H2O2 + O2. Its function is as follows. Destroys superoxide anion radicals which are normally produced within the cells and which are toxic to biological systems. Catalyzes the dismutation of superoxide anion radicals into O2 and H2O2 by successive reduction and oxidation of the transition metal ion at the active site. The polypeptide is Superoxide dismutase [Mn/Fe] (sodB) (Rickettsia conorii (strain ATCC VR-613 / Malish 7)).